The sequence spans 422 residues: Imidazolonepropionase (422 aa).

The Fe(3+) site is built by His-82 and His-84. Zn(2+) is bound by residues His-82 and His-84. 3 residues coordinate 4-imidazolone-5-propanoate: Arg-91, Tyr-154, and His-187. Position 154 (Tyr-154) interacts with N-formimidoyl-L-glutamate. Fe(3+) is bound at residue His-252. His-252 is a binding site for Zn(2+). Glu-255 is a binding site for 4-imidazolone-5-propanoate. A Fe(3+)-binding site is contributed by Asp-327. Asp-327 contacts Zn(2+). Asn-329 and Gly-331 together coordinate N-formimidoyl-L-glutamate. Ser-332 serves as a coordination point for 4-imidazolone-5-propanoate.

Belongs to the metallo-dependent hydrolases superfamily. HutI family. Zn(2+) serves as cofactor. Requires Fe(3+) as cofactor.

Its subcellular location is the cytoplasm. The catalysed reaction is 4-imidazolone-5-propanoate + H2O = N-formimidoyl-L-glutamate. It participates in amino-acid degradation; L-histidine degradation into L-glutamate; N-formimidoyl-L-glutamate from L-histidine: step 3/3. Functionally, catalyzes the hydrolytic cleavage of the carbon-nitrogen bond in imidazolone-5-propanoate to yield N-formimidoyl-L-glutamate. It is the third step in the universal histidine degradation pathway. This is Imidazolonepropionase from Alkaliphilus oremlandii (strain OhILAs) (Clostridium oremlandii (strain OhILAs)).